The primary structure comprises 566 residues: Endoglucanase G (566 aa).

The first 30 residues, 1–30 (MKKAKAIFSLVVALMVLAIFCFAQNTGSTA), serve as a signal peptide directing secretion. Glutamate 226 acts as the Proton donor in catalysis. Catalysis depends on glutamate 381, which acts as the Nucleophile. The tract at residues 473–494 (GTPQASDPPATPTATPTKPAAS) is disordered. The span at 474–494 (TPQASDPPATPTATPTKPAAS) shows a compositional bias: low complexity. Residues 497 to 564 (PSFIYGDINS…LLRSIDKLPH (68 aa)) form the Dockerin domain.

The protein belongs to the glycosyl hydrolase 5 (cellulase A) family.

The catalysed reaction is Endohydrolysis of (1-&gt;4)-beta-D-glucosidic linkages in cellulose, lichenin and cereal beta-D-glucans.. This enzyme catalyzes the endohydrolysis of 1,4-beta-glucosidic linkages in cellulose, lichenin and cereal beta-D-glucans. The sequence is that of Endoglucanase G (celG) from Acetivibrio thermocellus (strain ATCC 27405 / DSM 1237 / JCM 9322 / NBRC 103400 / NCIMB 10682 / NRRL B-4536 / VPI 7372) (Clostridium thermocellum).